We begin with the raw amino-acid sequence, 306 residues long: MWFKNLQLHHLPAPWAVTPDQMEKWLAPHAFQPGSSVEMQRVGWASPRDDGALVYSINRQMLLLFRAEKKLLPASVVNQVTKARALEVEEQQGFKVGRKQLRELKEQVTDELLPRAFSIRRDTRVWIDTANGWLVIDAAAQALADDVRSLLVKSIDPLPLAGVHVARSPVAAMTDWLLSGEAPGGFTVDQDAELRSSDQGGATVRYVGHALEANDMRRHIETGKQCTRLAMTWNDRISFVLTPSLTIKRVTPLDVIKEAADPTAQNDDERFDSDFTLMTGELGRMLTDLVDILGGDRHDSIHQAAA.

This sequence belongs to the RdgC family.

The protein localises to the cytoplasm. It localises to the nucleoid. Functionally, may be involved in recombination. This Burkholderia ambifaria (strain MC40-6) protein is Recombination-associated protein RdgC.